Reading from the N-terminus, the 264-residue chain is Thymidylate synthase (264 aa).

Arg21 contributes to the dUMP binding site. Position 51 (His51) interacts with (6R)-5,10-methylene-5,6,7,8-tetrahydrofolate. 126 to 127 (RR) contacts dUMP. Residue Cys146 is the Nucleophile of the active site. DUMP is bound by residues 166–169 (RSAD), Asn177, and 207–209 (HLY). Asp169 contacts (6R)-5,10-methylene-5,6,7,8-tetrahydrofolate. Ser263 lines the (6R)-5,10-methylene-5,6,7,8-tetrahydrofolate pocket.

It belongs to the thymidylate synthase family. Bacterial-type ThyA subfamily. As to quaternary structure, homodimer.

The protein localises to the cytoplasm. It carries out the reaction dUMP + (6R)-5,10-methylene-5,6,7,8-tetrahydrofolate = 7,8-dihydrofolate + dTMP. It functions in the pathway pyrimidine metabolism; dTTP biosynthesis. Functionally, catalyzes the reductive methylation of 2'-deoxyuridine-5'-monophosphate (dUMP) to 2'-deoxythymidine-5'-monophosphate (dTMP) while utilizing 5,10-methylenetetrahydrofolate (mTHF) as the methyl donor and reductant in the reaction, yielding dihydrofolate (DHF) as a by-product. This enzymatic reaction provides an intracellular de novo source of dTMP, an essential precursor for DNA biosynthesis. The polypeptide is Thymidylate synthase (Neisseria gonorrhoeae (strain ATCC 700825 / FA 1090)).